Consider the following 638-residue polypeptide: Chaperone protein DnaK (638 aa).

A Phosphothreonine; by autocatalysis modification is found at threonine 198. Residues 603–618 (QQAQAQQAQGADADAQ) show a composition bias toward low complexity. Residues 603 to 638 (QQAQAQQAQGADADAQQSKEDDVVDAEFEEVKDDKK) form a disordered region. Positions 624–638 (DVVDAEFEEVKDDKK) are enriched in acidic residues.

The protein belongs to the heat shock protein 70 family.

Acts as a chaperone. In Vibrio campbellii (strain ATCC BAA-1116), this protein is Chaperone protein DnaK.